Consider the following 170-residue polypeptide: Chorion protein S18 (170 aa).

Residues 1–17 (MMKFMCIFVCAIAAVSA) form the signal peptide. Residues 146-159 (AAAASSSVAGQHSG) are compositionally biased toward low complexity. Positions 146-170 (AAAASSSVAGQHSGYKNSGYKNSSY) are disordered. The segment covering 160–170 (YKNSGYKNSSY) has biased composition (polar residues).

It belongs to the chorion protein S15/S18 family.

Its subcellular location is the secreted. Its function is as follows. Chorion membrane (egg shell) protein; plays a role in protecting the egg from the environment. The chain is Chorion protein S18 (Cp18) from Drosophila virilis (Fruit fly).